A 1876-amino-acid chain; its full sequence is MTGSISGEADLRHWLIDYLVTNIGCTPDEVDPDLSLADLGVSSRDAVVLSGELSELLGRTVSPIDFWEHPTINALAAYLAAPEPSPDSDAAVKRGARNSLDEPIAVVGMGCRFPGGISCPEALWDFLCERRSSISQVPPQRWQPFEGGPPEVAAALARTTRWGSFLPDIDAFDAEFFEISPSEADKMDPQQRLLLEVAWEALEHAGIPPGTLRRSATGVFAGACLSEYGAMASADLSQVDGWSNSGGAMSIIANRLSYFLDLRGPSVAVDTACSSSLVAIHLACQSLRTQDCHLAIAAGVNLLLSPAVFRGFDQVGALSPTGQCRAFDATADGFVRGEGAGVVVLKRLTDAQRDGDRVLAVICGSAVTQDGRSNGLMAPNPAAQMAVLRAAYTNAGMQPSEVDYVEAHGTGTLLGDPIEARALGTVLGRGRPEDSPLLIGSVKTNLGHTEAAAGIAGFIKTVLAVQHGQIPPNQHFETANPHIPFTDLRMKVVDTQTEWPATGHPRRAGVSSFGFGGTNAHVVIEQGQEVRPAPGQGLSPAVSTLVVAGKTMQRVSATAGMLADWMEGPGADVALADVAHTLNHHRSRQPKFGTVVARDRTQAIAGLRALAAGQHAPGVVNPAEGSPGPGTVFVYSGRGSQWAGMGRQLLADEPAFAAAVAELEPVFVEQAGFSLHDVLANGEELVGIEQIQLGLIGMQLALTELWCSYGVQPDLVIGHSMGEVAAAVVAGALTPAEGLRVTATRSRLMAPLSGQGGMALLELDAPTTEALIADFPQVTLGIYNSPRQTVIAGPTEQIDELITRVRARDRFASRVNIEVAPHNPAMDALQPAMRSELADLTPRTPTIGIISTTYADLHTQPVFDAEHWATNMRNPVHFQQAIASAGSGADGAYHTFIEISAHPLLTQAIIDTLHSAQPGARYTSLGTLQRDTDDVVTFRTNLNKAHTIHPPHTPHPPEPHPPIPTTPWQHTRHWITTKYPAGSVGSAPRAGTLLGQHTTVATVSASPPSHLWQARLAPDAKPYQGGHRFHQVEVVPASVVLHTILSAATELGYSALSEVRFEQPIFADRPRLIQVVADNRAISLASSPAAGTPSDRWTRHVTAQLSSSPSDSASSLNEHHRANGQPPERAHRDLIPDLAELLAMRGIDGLPFSWTVASWTQHSSNLTVAIDLPEALPEGSTGPLLDAAVHLAALSDVADSRLYVPASIEQISLGDVVTGPRSSVTLNRTAHDDDGITVDVTVAAHGEVPSLSMRSLRYRALDFGLDVGRAQPPASTGPVEAYCDATNFVHTIDWQPQTVPDATHPGAEQVTHPGPVAIIGDDGAALCETLEGAGYQPAVMSDGVSQARYVVYVADSDPAGADETDVDFAVRICTEITGLVRTLAERDADKPAALWILTRGVHESVAPSALRQSFLWGLAGVIAAEHPELWGGLVDLAINDDLGEFGPALAELLAKPSKSILVRRDGVVLAPALAPVRGEPARKSLQCRPDAAYLITGGLGALGLLMADWLADRGAHRLVLTGRTPLPPRRDWQLDTLDTELRRRIDAIRALEMRGVTVEAVAADVGCREDVQALLAARDRDGAAPIRGIIHAAGITNDQLVTSMTGDAVRQVMWPKIGGSQVLHDAFPPGSVDFFYLTASAAGIFGIPGQGSYAAANSYLDALARARRQQGCHTMSLDWVAWRGLGLAADAQLVSEELARMGSRDITPSEAFTAWEFVDGYDVAQAVVVPMPAPAGADGSGANAYLLPARNWSVMAATEVRSELEQGLRRIIAAELRVPEKELDTDRPFAELGLNSLMAMAIRREAEQFVGIELSATMLFNHPTVKSLASYLAKRVAPHDVSQDNQISALSSSAGSVLDSLFDRIESAPPEAERSV.

One can recognise a Carrier 1 domain in the interval 9–83 (ADLRHWLIDY…ALAAYLAAPE (75 aa)). The residue at position 43 (Ser-43) is an O-(pantetheine 4'-phosphoryl)serine. In terms of domain architecture, Ketosynthase family 3 (KS3) spans 101–526 (DEPIAVVGMG…GTNAHVVIEQ (426 aa)). Residues Cys-273, His-408, and His-448 each act as for beta-ketoacyl synthase activity in the active site. Residues 624–950 (EGSPGPGTVF…NLNKAHTIHP (327 aa)) are acyltransferase. Ser-720 acts as the For malonyltransferase activity in catalysis. An N-terminal hotdog fold region spans residues 997-1112 (HTTVATVSAS…AQLSSSPSDS (116 aa)). One can recognise a PKS/mFAS DH domain in the interval 997–1267 (HTTVATVSAS…YRALDFGLDV (271 aa)). The Proton acceptor; for dehydratase activity role is filled by His-1027. A disordered region spans residues 1104 to 1130 (QLSSSPSDSASSLNEHHRANGQPPERA). Positions 1106-1115 (SSSPSDSASS) are enriched in low complexity. The segment at 1130-1267 (AHRDLIPDLA…YRALDFGLDV (138 aa)) is C-terminal hotdog fold. The active-site Proton donor; for dehydratase activity is Asp-1186. The tract at residues 1491-1728 (AAYLITGGLG…DGYDVAQAVV (238 aa)) is beta-ketoacyl reductase. Position 1492 to 1551 (1492 to 1551 (AYLITGGLGALGLLMADWLADRGAHRLVLTGRTPLPPRRDWQLDTLDTELRRRIDAIRAL)) interacts with NADP(+). Residues 1759–1836 (EVRSELEQGL…SLASYLAKRV (78 aa)) enclose the Carrier 2 domain. Ser-1796 bears the O-(pantetheine 4'-phosphoryl)serine mark.

NADP(+) is required as a cofactor. Requires pantetheine 4'-phosphate as cofactor.

The catalysed reaction is icosanoyl-[(phenol)carboxyphthiodiolenone synthase] + 2 (S)-methylmalonyl-CoA + 3 malonyl-CoA + 5 NADPH + 10 H(+) = C32-carboxyphthiodiolenone-[(phenol)carboxyphthiodiolenone synthase] + 5 CO2 + 5 NADP(+) + 5 CoA + 2 H2O. The enzyme catalyses docosanoyl-[(phenol)carboxyphthiodiolenone synthase] + 2 (S)-methylmalonyl-CoA + 3 malonyl-CoA + 5 NADPH + 10 H(+) = C34-carboxyphthiodiolenone-[(phenol)carboxyphthiodiolenone synthase] + 5 CO2 + 5 NADP(+) + 5 CoA + 2 H2O. It carries out the reaction 17-(4-hydroxyphenyl)heptadecanoyl-[(phenol)carboxyphthiodiolenone synthase] + 2 (S)-methylmalonyl-CoA + 3 malonyl-CoA + 5 NADPH + 10 H(+) = C35-(phenol)carboxyphthiodiolenone-[(phenol)carboxyphthiodiolenone synthase] + 5 CO2 + 5 NADP(+) + 5 CoA + 2 H2O. It catalyses the reaction 19-(4-hydroxyphenyl)nonadecanoyl-[(phenol)carboxyphthiodiolenone synthase] + 2 (S)-methylmalonyl-CoA + 3 malonyl-CoA + 5 NADPH + 10 H(+) = C37-(phenol)carboxyphthiodiolenone-[(phenol)carboxyphthiodiolenone synthase] + 5 CO2 + 5 NADP(+) + 5 CoA + 2 H2O. It functions in the pathway lipid metabolism; fatty acid biosynthesis. In terms of biological role, part of the PpsABCDE complex involved in the biosynthesis of the lipid core common to phthiocerols and phenolphthiocerols by successive additions of malonyl-CoA or methylmalonyl-CoA extender units. PpsA can accept as substrate the activated forms of either icosanoyl (C20), docosanoyl (C22) or lignoceroyl (C24) groups from FadD26, or a (4-hydroxyphenyl)-C17 or (4-hydroxyphenyl)-C19 fatty acyl from FadD29. PpsA initiates the biosynthesis and extends its substrate using a malonyl-CoA extender unit. The PpsB and PpsC proteins add the second and third malonyl-CoA extender units. PpsD adds an (R)-methylmalonyl unit and PpsE adds a second (R)-methylmalonyl unit. The incorporation of the methylmalonyl units results in formation of two branched methyl groups in the elongated product. This chain is Phenolphthiocerol/phthiocerol polyketide synthase subunit A (ppsA), found in Mycobacterium bovis (strain ATCC BAA-935 / AF2122/97).